We begin with the raw amino-acid sequence, 309 residues long: Porphobilinogen deaminase (309 aa).

Cys-244 is subject to S-(dipyrrolylmethanemethyl)cysteine.

It belongs to the HMBS family. Monomer. The cofactor is dipyrromethane.

It catalyses the reaction 4 porphobilinogen + H2O = hydroxymethylbilane + 4 NH4(+). It participates in porphyrin-containing compound metabolism; protoporphyrin-IX biosynthesis; coproporphyrinogen-III from 5-aminolevulinate: step 2/4. Functionally, tetrapolymerization of the monopyrrole PBG into the hydroxymethylbilane pre-uroporphyrinogen in several discrete steps. The chain is Porphobilinogen deaminase from Listeria welshimeri serovar 6b (strain ATCC 35897 / DSM 20650 / CCUG 15529 / CIP 8149 / NCTC 11857 / SLCC 5334 / V8).